The following is a 67-amino-acid chain: DNA-directed RNA polymerase subunit omega (67 aa).

Belongs to the RNA polymerase subunit omega family. As to quaternary structure, the RNAP catalytic core consists of 2 alpha, 1 beta, 1 beta' and 1 omega subunit. When a sigma factor is associated with the core the holoenzyme is formed, which can initiate transcription.

The catalysed reaction is RNA(n) + a ribonucleoside 5'-triphosphate = RNA(n+1) + diphosphate. In terms of biological role, promotes RNA polymerase assembly. Latches the N- and C-terminal regions of the beta' subunit thereby facilitating its interaction with the beta and alpha subunits. In Listeria welshimeri serovar 6b (strain ATCC 35897 / DSM 20650 / CCUG 15529 / CIP 8149 / NCTC 11857 / SLCC 5334 / V8), this protein is DNA-directed RNA polymerase subunit omega.